Reading from the N-terminus, the 453-residue chain is Ethanolamine ammonia-lyase large subunit (453 aa).

Residues 160–162 (RLQ) and asparagine 193 contribute to the substrate site. Adenosylcob(III)alamin contacts are provided by proline 194 and glutamine 246. Glutamate 287 is a substrate binding site. Serine 295 is an adenosylcob(III)alamin binding site. Aspartate 362 is a binding site for substrate. Methionine 401 is an adenosylcob(III)alamin binding site.

Belongs to the EutB family. As to quaternary structure, the basic unit is a heterodimer which dimerizes to form tetramers. The heterotetramers trimerize; 6 large subunits form a core ring with 6 small subunits projecting outwards. Adenosylcob(III)alamin serves as cofactor.

Its subcellular location is the bacterial microcompartment. It carries out the reaction ethanolamine = acetaldehyde + NH4(+). It participates in amine and polyamine degradation; ethanolamine degradation. Functionally, catalyzes the deamination of various vicinal amino-alcohols to oxo compounds. It is spontaneously inactivated by its substrate and reactivated by EutA. May play a role in BMC assembly or maintenance. In terms of biological role, expression of the eut operon allows this bacteria to use ethanolamine (EA) as a carbon, nitrogen and energy source. It relies on cobalamin (vitamin B12) both as a cofactor for the ethanolamine ammonia-lyase activity and to induce the operon. EA enhances bacterial survival in macrophages in a concentration-dependent manner, suggesting it is an important nutrient during infection. In Salmonella typhimurium (strain LT2 / SGSC1412 / ATCC 700720), this protein is Ethanolamine ammonia-lyase large subunit.